The sequence spans 315 residues: Calumenin-B (315 aa).

An N-terminal signal peptide occupies residues 1–19 (MEQWPLLFVVALCILQSSS). The segment covering 22–39 (MEKKDRVHHDAPLSNKDH) has biased composition (basic and acidic residues). The interval 22-42 (MEKKDRVHHDAPLSNKDHDDE) is disordered. EF-hand domains follow at residues 68 to 103 (ESKE…AQRR), 104 to 139 (WIYE…YILD), 151 to 186 (QMMT…EEFD), 188 to 223 (MKDI…QNGD), 229 to 264 (WVKT…ADYD), and 265 to 300 (HAEA…FVGS). 27 residues coordinate Ca(2+): Asp81, Asp83, Asp85, Glu92, Asp117, Asn119, Asp121, Glu128, Asp164, Asp166, Asp168, Arg170, Glu175, Asp201, Asn203, Asp205, Glu212, Asp242, Asn244, Asp246, Arg248, Glu253, Asp278, Asp280, Asp282, Arg284, and Glu289. A Prevents secretion from ER motif is present at residues 312–315 (HDEF).

It belongs to the CREC family. Interacts with ggcx.

It localises to the endoplasmic reticulum membrane. The protein resides in the golgi apparatus. Its subcellular location is the secreted. The protein localises to the melanosome. It is found in the sarcoplasmic reticulum lumen. Involved in regulation of vitamin K-dependent carboxylation of multiple N-terminal glutamate residues. Seems to inhibit gamma-carboxylase ggcx. Binds 7 calcium ions with a low affinity. This Danio rerio (Zebrafish) protein is Calumenin-B (calub).